A 146-amino-acid chain; its full sequence is Ribosomal RNA large subunit methyltransferase H (146 aa).

S-adenosyl-L-methionine contacts are provided by residues Leu-60, Gly-93, and 112-117 (MGKMTL).

The protein belongs to the RNA methyltransferase RlmH family. Homodimer.

Its subcellular location is the cytoplasm. It carries out the reaction pseudouridine(1915) in 23S rRNA + S-adenosyl-L-methionine = N(3)-methylpseudouridine(1915) in 23S rRNA + S-adenosyl-L-homocysteine + H(+). Specifically methylates the pseudouridine at position 1915 (m3Psi1915) in 23S rRNA. The sequence is that of Ribosomal RNA large subunit methyltransferase H from Koribacter versatilis (strain Ellin345).